Reading from the N-terminus, the 314-residue chain is MRIVVALGGNALLQRGMKGTFQDQQAACRLAMSQIVKIVKDGNELVMTHGNGPQCGAIFLQNVAGEQEKVPAMPLHVCGAETQGFLGELLQQELDGALRAEGIKKNVVSIVTQSFVDPKDPAFQNPTKPIGPFYSKEEAEFLRNERGYNMVEDAGRGYRMIVPSPVPQKFVEKEAIKTLVNSGFIVVCSGGGGIPVILDEQENRIEGVDAVIDKDLGASVLAAATNADAFMILTDVPEALLNYRKENETAIRQATVAEMEKYIEEGHFIKGSMLPKVQACLRFVKSTGKPALITALDCALQALKGERGTKIVPN.

It belongs to the carbamate kinase family. In terms of assembly, homodimer.

The catalysed reaction is hydrogencarbonate + NH4(+) + ATP = carbamoyl phosphate + ADP + H2O + H(+). It participates in metabolic intermediate metabolism; carbamoyl phosphate degradation; CO(2) and NH(3) from carbamoyl phosphate: step 1/1. The sequence is that of Carbamate kinase (CBK) from Trichomonas vaginalis.